The primary structure comprises 447 residues: Tektin-4 (447 aa).

2 coiled-coil regions span residues 322–348 (LRKT…DKEA) and 375–423 (FRLL…TNSL).

The protein belongs to the tektin family. As to quaternary structure, microtubule inner protein component of sperm flagellar doublet microtubules. Ubiquitinated, leading to its degradation. Deubiquitinated by USP16, promoting its stability. Detected in testis, where it is weakly expressed in round spermatids, and strongly expressed in the flagellum of step 16 elongated spermatids (at protein level). Expressed in spermatozoa. In the sperm flagellum, localizes to the principal piece and midpiece (at protein level). Specifically expressed in testis; not detected in other tissues tested.

The protein localises to the cytoplasm. The protein resides in the cytoskeleton. It is found in the cilium axoneme. Its subcellular location is the flagellum axoneme. Functionally, microtubule inner protein (MIP) part of the dynein-decorated doublet microtubules (DMTs) in cilia and flagellar axoneme. Forms filamentous polymers in the walls of ciliary and flagellar microtubules. Contributes to normal sperm motility. This Mus musculus (Mouse) protein is Tektin-4 (Tekt4).